Consider the following 699-residue polypeptide: D-(-)-3-hydroxybutyrate oligomer hydrolase (699 aa).

Positions 1-33 (MTAIRGGSRRAPGLALALLGGVLLGACHGDENA) are cleaved as a signal peptide. The active-site Charge relay system is Ser-311.

It belongs to the D-(-)-3-hydroxybutyrate oligomer hydrolase family.

Its subcellular location is the secreted. The enzyme catalyses (3R)-hydroxybutanoate dimer + H2O = 2 (R)-3-hydroxybutanoate + H(+). The protein operates within lipid metabolism; butanoate metabolism. Functionally, participates in the degradation of poly-3-hydroxybutyrate (PHB). It works downstream of poly(3-hydroxybutyrate) depolymerase, hydrolyzing D(-)-3-hydroxybutyrate oligomers of various length (3HB-oligomers) into 3HB-monomers. The polypeptide is D-(-)-3-hydroxybutyrate oligomer hydrolase (Burkholderia pseudomallei (strain 1106a)).